We begin with the raw amino-acid sequence, 318 residues long: dTDP-6-deoxy-L-talose 4-dehydrogenase (NAD(P)(+)) (318 aa).

NAD(+)-binding positions include 19–20, 60–61, Asn95, Thr120, Tyr145, and Lys149; these read FI and DP. Residues Thr120 and Tyr145 each contribute to the substrate site. Tyr145 serves as the catalytic Proton acceptor.

Belongs to the NAD(P)-dependent epimerase/dehydratase family.

It catalyses the reaction dTDP-6-deoxy-beta-L-talose + NAD(+) = dTDP-4-dehydro-beta-L-rhamnose + NADH + H(+). The enzyme catalyses dTDP-6-deoxy-beta-L-talose + NADP(+) = dTDP-4-dehydro-beta-L-rhamnose + NADPH + H(+). Catalyzes the reduction of dTDP-6-deoxy-L-lyxo-4-hexulose to dTDP-6-deoxy-L-talose. Can use NAD(+) or NADP(+). This is dTDP-6-deoxy-L-talose 4-dehydrogenase (NAD(P)(+)) (tal) from Kitasatospora kifunensis (Streptomyces kifunensis).